Here is a 206-residue protein sequence, read N- to C-terminus: Ubiquitin-conjugating enzyme E2 S (206 aa).

A UBC core domain is found at Q14 to Q160. The Glycyl thioester intermediate role is filled by C98. The segment at G165–K191 is disordered. The span at D168–K191 shows a compositional bias: basic and acidic residues.

It belongs to the ubiquitin-conjugating enzyme family.

It catalyses the reaction S-ubiquitinyl-[E1 ubiquitin-activating enzyme]-L-cysteine + [E2 ubiquitin-conjugating enzyme]-L-cysteine = [E1 ubiquitin-activating enzyme]-L-cysteine + S-ubiquitinyl-[E2 ubiquitin-conjugating enzyme]-L-cysteine.. Its pathway is protein modification; protein ubiquitination. Catalyzes the covalent attachment of ubiquitin to other proteins. Acts as an essential factor of the anaphase promoting complex/cyclosome (APC/C), a cell cycle-regulated ubiquitin ligase that controls progression through mitosis. Acts by specifically elongating polyubiquitin chains initiated by the E2 enzyme vih/UbcH10 on APC/C substrates, enhancing the degradation of APC/C substrates by the proteasome and promoting mitotic exit. This Drosophila mojavensis (Fruit fly) protein is Ubiquitin-conjugating enzyme E2 S.